The chain runs to 397 residues: Elongation factor Tu (397 aa).

The tr-type G domain occupies 10 to 207 (KPHVNIGTIG…ACDSYIPEPQ (198 aa)). Residues 19 to 26 (GHIDHGKT) form a G1 region. Residue 19 to 26 (GHIDHGKT) coordinates GTP. Position 26 (threonine 26) interacts with Mg(2+). The interval 60-64 (GITIA) is G2. Positions 81–84 (DCPG) are G3. GTP-binding positions include 81-85 (DCPGH) and 136-139 (NKCD). The G4 stretch occupies residues 136–139 (NKCD). Positions 174-176 (SAL) are G5.

The protein belongs to the TRAFAC class translation factor GTPase superfamily. Classic translation factor GTPase family. EF-Tu/EF-1A subfamily. Monomer.

The protein resides in the cytoplasm. The enzyme catalyses GTP + H2O = GDP + phosphate + H(+). Its function is as follows. GTP hydrolase that promotes the GTP-dependent binding of aminoacyl-tRNA to the A-site of ribosomes during protein biosynthesis. The protein is Elongation factor Tu of Nitratidesulfovibrio vulgaris (strain ATCC 29579 / DSM 644 / CCUG 34227 / NCIMB 8303 / VKM B-1760 / Hildenborough) (Desulfovibrio vulgaris).